A 97-amino-acid polypeptide reads, in one-letter code: Osteocalcin (97 aa).

An N-terminal signal peptide occupies residues 1–20 (MKAAALLLLAALLTFSLCRS). Positions 21 to 48 (APDGSDARSAKAFISHRQRAEMVRRQKR) are excised as a propeptide. A Gla domain is found at 49–95 (HYAQDSGVAGAPPNPLEAQREVCELSPDCDELADQIGFQEAYRRFYG). Ca(2+) is bound by residues E65, E69, E72, and D78. 3 positions are modified to 4-carboxyglutamate: E65, E69, and E72. Cysteines 71 and 77 form a disulfide.

Belongs to the osteocalcin/matrix Gla protein family. In terms of processing, gamma-carboxyglutamate residues are formed by vitamin K dependent carboxylation by GGCX. These residues are essential for the binding of calcium.

The protein resides in the secreted. In terms of biological role, the carboxylated form is one of the main organic components of the bone matrix, which constitutes 1-2% of the total bone protein. The carboxylated form binds strongly to apatite and calcium. The protein is Osteocalcin (BGLAP) of Gallus gallus (Chicken).